Here is a 296-residue protein sequence, read N- to C-terminus: 4-diphosphocytidyl-2-C-methyl-D-erythritol kinase (296 aa).

Lysine 13 is a catalytic residue. 98-108 (PVAAGIGGGSA) contacts ATP. Aspartate 140 is a catalytic residue.

The protein belongs to the GHMP kinase family. IspE subfamily.

It carries out the reaction 4-CDP-2-C-methyl-D-erythritol + ATP = 4-CDP-2-C-methyl-D-erythritol 2-phosphate + ADP + H(+). Its pathway is isoprenoid biosynthesis; isopentenyl diphosphate biosynthesis via DXP pathway; isopentenyl diphosphate from 1-deoxy-D-xylulose 5-phosphate: step 3/6. Its function is as follows. Catalyzes the phosphorylation of the position 2 hydroxy group of 4-diphosphocytidyl-2C-methyl-D-erythritol. The protein is 4-diphosphocytidyl-2-C-methyl-D-erythritol kinase of Rhodopseudomonas palustris (strain HaA2).